A 114-amino-acid polypeptide reads, in one-letter code: Large ribosomal subunit protein uL18 (114 aa).

This sequence belongs to the universal ribosomal protein uL18 family. As to quaternary structure, part of the 50S ribosomal subunit; part of the 5S rRNA/L5/L18/L25 subcomplex. Contacts the 5S and 23S rRNAs.

In terms of biological role, this is one of the proteins that bind and probably mediate the attachment of the 5S RNA into the large ribosomal subunit, where it forms part of the central protuberance. This is Large ribosomal subunit protein uL18 from Parabacteroides distasonis (strain ATCC 8503 / DSM 20701 / CIP 104284 / JCM 5825 / NCTC 11152).